A 314-amino-acid chain; its full sequence is Glycine--tRNA ligase alpha subunit (314 aa).

The protein belongs to the class-II aminoacyl-tRNA synthetase family. In terms of assembly, tetramer of two alpha and two beta subunits.

The protein resides in the cytoplasm. The enzyme catalyses tRNA(Gly) + glycine + ATP = glycyl-tRNA(Gly) + AMP + diphosphate. The sequence is that of Glycine--tRNA ligase alpha subunit from Mesorhizobium japonicum (strain LMG 29417 / CECT 9101 / MAFF 303099) (Mesorhizobium loti (strain MAFF 303099)).